Here is a 102-residue protein sequence, read N- to C-terminus: A-type ATP synthase subunit F (102 aa).

Belongs to the V-ATPase F subunit family. Has multiple subunits with at least A(3), B(3), C, D, E, F, H, I and proteolipid K(x).

It is found in the cell membrane. Functionally, component of the A-type ATP synthase that produces ATP from ADP in the presence of a proton gradient across the membrane. This Thermococcus onnurineus (strain NA1) protein is A-type ATP synthase subunit F.